Here is a 1770-residue protein sequence, read N- to C-terminus: Vitellogenin (1770 aa).

Residues 1-16 form the signal peptide; that stretch reads MLLLLTLLLFAGTVAA. Residues 22 to 809 form the Vitellogenin domain; that stretch reads WQVGNEYTYL…SEDSVIPRIL (788 aa). Cys178 and Cys222 are joined by a disulfide. A glycan (N-linked (GlcNAc...) asparagine) is linked at Asn296. Positions 373–394 are disordered; sequence SSSSSISSSEENDFWQPKPTLE. N-linked (GlcNAc...) asparagine glycosylation is present at Asn1067. Positions 1442–1635 constitute a VWFD domain; the sequence is TSCMLDKTRA…SYALISNQCE (194 aa). 2 disulfides stabilise this stretch: Cys1444–Cys1598 and Cys1466–Cys1634.

As to expression, accumulates in the hemolymph. Represents up to 70% of the queen's hemolymph proteins. During the first week of the worker adult life, when it becomes a nurse bee and performs brood-rearing tasks, the vitellogenin titer increases and may account for up to 40% of the total hemolymph proteins.

The protein localises to the secreted. Its function is as follows. Precursor of the egg-yolk proteins that are sources of nutrients during embryonic development. Involved in the differentiation of honeybee larvae into queens. In Apis mellifera (Honeybee), this protein is Vitellogenin (Vg).